Reading from the N-terminus, the 445-residue chain is MAVEIVKSSMVTAGEATPEHRIWLSNLDLLVARSHTPTVYVYRRTGPDSDAAFFSPDVLKAALSKVLVPFYPLAGRLAQDSAGRPEISCTGEGVLFVTARSGATIDDLGDLAPSDELRRMLVPAADVAAASILAMFQVTFFRCGGVCLGAAIHHTAADGLAALDFVNTWAAIARDVAGDGEAAAAAVQRPWLDRTLLRARSPPAVRFDHAEYSRRRGGGSKLPFDSAILPMSKNQLNALKGAGAGAGKRLSTFTAVVAHVWRCACKARGLAVAGTEAATRLYMTADARTRLHPPLPRGYLGNAIFRASAVSKVSDIVAAGPLGAVAEKVSAATARLDDGYVRSLLDHLEQTAAAASGGAAGLRKGEWVMPESDLWVISWQGLPLYDADFGWGRPAFMGRACLQFSGLVYLVPGRDDGDGRLDVVVAMDPESLAKFKDVFYEELKC.

Active-site proton acceptor residues include His154 and Asp388.

It belongs to the plant acyltransferase family. In terms of tissue distribution, expressed in leaves.

Functionally, hydroxycinnamoyl transferase that catalyzes the transfer of an acyl from p-coumaryol-CoA to putrescine, to produce coumaroyl putrescine. The chain is Putrescine hydroxycinnamoyltransferase 1 from Oryza sativa subsp. japonica (Rice).